We begin with the raw amino-acid sequence, 253 residues long: Bridging integrator 3 (253 aa).

The 224-residue stretch at 9–232 (GQPKKQIVPK…LDQPGHSDEQ (224 aa)) folds into the BAR domain. Coiled coils occupy residues 18–51 (KTVERDFEREYGKLQQLEEQTRRLQKDMKKSTDA), 120–152 (SLNMAVKRREQALQDYRRLQAKVEKYEEKEKTG), and 231–247 (EQRERENEAKLSELRAL). Residues 220–240 (SHQLDQPGHSDEQRERENEAK) are disordered. The span at 227–240 (GHSDEQRERENEAK) shows a compositional bias: basic and acidic residues.

In terms of tissue distribution, ubiquitously expressed except in brain.

The protein localises to the cytoplasm. Its subcellular location is the cytoskeleton. Functionally, involved in cytokinesis and septation where it has a role in the localization of F-actin. This chain is Bridging integrator 3 (BIN3), found in Homo sapiens (Human).